The sequence spans 418 residues: Putative methylthiotransferase jhp_0270 (418 aa).

Positions 2–110 (KKVYFKTFGC…INALLQEKKR (109 aa)) constitute an MTTase N-terminal domain. [4Fe-4S] cluster is bound by residues cysteine 11, cysteine 45, cysteine 74, cysteine 144, cysteine 148, and cysteine 151. The Radical SAM core domain maps to 130 to 355 (FVGKTRAFIK…KDLIFHKNKA (226 aa)).

The protein belongs to the methylthiotransferase family. [4Fe-4S] cluster serves as cofactor.

The chain is Putative methylthiotransferase jhp_0270 from Helicobacter pylori (strain J99 / ATCC 700824) (Campylobacter pylori J99).